Here is a 3432-residue protein sequence, read N- to C-terminus: Hybrid signal transduction histidine kinase G (3432 aa).

Composition is skewed to low complexity over residues 44–68 (HFSNSVLNQTTTTTTTTTTTTTTTN), 76–90 (SQLQAQLQSQSQQNN), and 126–145 (QPQQQQQQQASNKSKLSQKQ). Disordered stretches follow at residues 44–109 (HFSN…TNSS) and 124–240 (DDQP…HNIN). Over residues 146 to 157 (TSQLNISGNNSG) the composition is skewed to polar residues. 2 stretches are compositionally biased toward low complexity: residues 165-177 (TISNSNNSINFIH) and 187-238 (KTPI…NNHN). Positions 263 to 792 (LSFKHGYNSG…YGLKKDLEMF (530 aa)) constitute a Protein kinase domain. ATP-binding positions include 269–277 (YNSGLGGNF) and K305. The segment covering 399–419 (NNNNNNNNSYNNNYNNNNNNN) has biased composition (low complexity). Disordered regions lie at residues 399-426 (NNNNNNNNSYNNNYNNNNNNNGQVTSPI) and 443-542 (FQLN…STPL). A compositionally biased stretch (polar residues) spans 443 to 467 (FQLNSSTNSTGSPLIITSQPMPFQL). The segment covering 468-479 (NSNSNTTASSSS) has biased composition (low complexity). Positions 480 to 490 (PITHSNLNTAI) are enriched in polar residues. Residues 491–508 (TSTTTSNSNSNNNSNNNN) are compositionally biased toward low complexity. Positions 509-525 (SGGGGGGGGGGGGGGGT) are enriched in gly residues. D585 functions as the Proton acceptor; for protein kinase activity in the catalytic mechanism. Residues 863–1121 (GKEFIIVSGL…TMKIVLKNLD (259 aa)) are AAA. 871-878 (GLSGVGKT) is a binding site for ATP. 2 disordered regions span residues 1040-1077 (NNFSINNNNNNNNGCNNNNNNNNNNINNNNNNNNNNNI) and 1261-1290 (TTTTNNNTTNNTNNNNTNNNNNNTNGNNSD). Over residues 1261 to 1288 (TTTTNNNTTNNTNNNNTNNNNNNTNGNN) the composition is skewed to low complexity. Helical transmembrane passes span 1567–1587 (VMVIMMPSLYLNNLNVLTLLL) and 1599–1619 (ISSWSSTAFAMFGMVVSIGHF). A TPR repeat occupies 1965-1998 (SQLMLAKAEFERINGNFEQAMEYFSEAISLAQQF). Disordered regions lie at residues 2071–2095 (EYSNNNNNNNSNNNNNNANQSQASI) and 2299–2349 (GYNN…NNNK). Positions 2073 to 2095 (SNNNNNNNSNNNNNNANQSQASI) are enriched in low complexity. The 251-residue stretch at 2215-2465 (YFDRLLKRLM…SNARLFIKVN (251 aa)) folds into the GAF domain. The 279-residue stretch at 2491–2769 (NMSHEMRTPL…TFHFCVELGK (279 aa)) folds into the Histidine kinase domain. At H2494 the chain carries Phosphohistidine; by autocatalysis. A compositionally biased stretch (low complexity) spans 2637–2648 (TTTNNKKQLNTD). 5 disordered regions span residues 2637–2673 (TTTNNKKQLNTDNDGDDDDDDDNENLDENNEDTSIDL), 2785–2815 (LLNNNNNNNNNNNNNNNNNNNNNNNNNNNNN), 2917–3030 (LSPK…NNNS), 3134–3160 (NNNINNINNNNNKSNSPIPEDSKHSQY), and 3247–3281 (NSISTTSHSSTSTSSSSSSSSSSSSSLSSTTTITT). Positions 2649 to 2673 (NDGDDDDDDDNENLDENNEDTSIDL) are enriched in acidic residues. 3 stretches are compositionally biased toward low complexity: residues 2787–2815 (NNNNNNNNNNNNNNNNNNNNNNNNNNNNN), 2935–3029 (LSSS…HNNN), and 3134–3145 (NNNINNINNNNN). Residues 3305–3424 (KILIVEDNEM…DLRYVINRYG (120 aa)) form the Response regulatory domain. D3356 is modified (4-aspartylphosphate).

The protein belongs to the protein kinase superfamily. Ser/Thr protein kinase family. Activation probably requires transfer of a phosphate group between a histidine in the kinase core (transmitter) domain and an aspartate of the receiver domain.

It is found in the membrane. It carries out the reaction ATP + protein L-histidine = ADP + protein N-phospho-L-histidine.. The enzyme catalyses L-seryl-[protein] + ATP = O-phospho-L-seryl-[protein] + ADP + H(+). The catalysed reaction is L-threonyl-[protein] + ATP = O-phospho-L-threonyl-[protein] + ADP + H(+). Functionally, acts as a receptor histidine kinase for a signal transduction pathway. This protein undergoes an ATP-dependent autophosphorylation at a conserved histidine residue in the kinase core, and a phosphoryl group is then transferred to a conserved aspartate residue in the receiver domain. This chain is Hybrid signal transduction histidine kinase G (dhkG), found in Dictyostelium discoideum (Social amoeba).